A 431-amino-acid polypeptide reads, in one-letter code: 3-phosphoshikimate 1-carboxyvinyltransferase (431 aa).

3-phosphoshikimate-binding residues include Lys21, Ser22, and Arg26. Lys21 lines the phosphoenolpyruvate pocket. Residues Gly93 and Arg122 each contribute to the phosphoenolpyruvate site. Residues Ser167, Gln169, Asp318, and Lys345 each contribute to the 3-phosphoshikimate site. Gln169 serves as a coordination point for phosphoenolpyruvate. Asp318 functions as the Proton acceptor in the catalytic mechanism. Phosphoenolpyruvate contacts are provided by Arg349 and Arg391.

The protein belongs to the EPSP synthase family. In terms of assembly, monomer.

The protein localises to the cytoplasm. It carries out the reaction 3-phosphoshikimate + phosphoenolpyruvate = 5-O-(1-carboxyvinyl)-3-phosphoshikimate + phosphate. It functions in the pathway metabolic intermediate biosynthesis; chorismate biosynthesis; chorismate from D-erythrose 4-phosphate and phosphoenolpyruvate: step 6/7. Catalyzes the transfer of the enolpyruvyl moiety of phosphoenolpyruvate (PEP) to the 5-hydroxyl of shikimate-3-phosphate (S3P) to produce enolpyruvyl shikimate-3-phosphate and inorganic phosphate. This is 3-phosphoshikimate 1-carboxyvinyltransferase from Roseiflexus castenholzii (strain DSM 13941 / HLO8).